The chain runs to 132 residues: Large ribosomal subunit protein uL14 (132 aa).

This sequence belongs to the universal ribosomal protein uL14 family. As to quaternary structure, part of the 50S ribosomal subunit. Forms a cluster with proteins L3 and L24e, part of which may contact the 16S rRNA in 2 intersubunit bridges.

Its function is as follows. Binds to 23S rRNA. Forms part of two intersubunit bridges in the 70S ribosome. The polypeptide is Large ribosomal subunit protein uL14 (Methanococcus aeolicus (strain ATCC BAA-1280 / DSM 17508 / OCM 812 / Nankai-3)).